The following is a 1486-amino-acid chain: Chromosome partition protein MukB (1486 aa).

34–41 (GGNGAGKS) contacts ATP. 3 coiled-coil regions span residues 326 to 418 (LEAD…QYNQ), 444 to 480 (LETF…QAYQ), and 509 to 603 (RHLA…RAPV). A flexible hinge region spans residues 666–783 (PGGSEDQRLN…EVPLFGRAAR (118 aa)). Coiled coils occupy residues 835–923 (EAEI…AKLE), 977–1115 (EMLS…TAKA), and 1209–1266 (VEAI…QNVS).

This sequence belongs to the SMC family. MukB subfamily. As to quaternary structure, homodimerization via its hinge domain. Binds to DNA via its C-terminal region. Interacts, and probably forms a ternary complex, with MukE and MukF via its C-terminal region. The complex formation is stimulated by calcium or magnesium. Interacts with tubulin-related protein FtsZ.

The protein resides in the cytoplasm. It is found in the nucleoid. In terms of biological role, plays a central role in chromosome condensation, segregation and cell cycle progression. Functions as a homodimer, which is essential for chromosome partition. Involved in negative DNA supercoiling in vivo, and by this means organize and compact chromosomes. May achieve or facilitate chromosome segregation by condensation DNA from both sides of a centrally located replisome during cell division. The protein is Chromosome partition protein MukB of Escherichia coli O127:H6 (strain E2348/69 / EPEC).